The following is a 1148-amino-acid chain: Replication factor C subunit 1 (1148 aa).

Residues 46 to 56 show a composition bias toward basic and acidic residues; sequence NSSRKEDDFKQ. Disordered stretches follow at residues 46-201 and 228-380; these read NSSR…LNDE and TLAM…TNYQ. Residue Lys-50 forms a Glycyl lysine isopeptide (Lys-Gly) (interchain with G-Cter in SUMO2) linkage. A Phosphotyrosine modification is found at Tyr-67. Ser-69, Ser-71, Ser-73, and Ser-108 each carry phosphoserine. Position 110 is a phosphothreonine (Thr-110). A compositionally biased stretch (polar residues) spans 130–141; the sequence is RSTNSHLGTSNM. The residue at position 156 (Ser-156) is a Phosphoserine. Phosphothreonine is present on residues Thr-161 and Thr-163. 3 positions are modified to phosphoserine: Ser-164, Ser-173, and Ser-190. A compositionally biased stretch (basic and acidic residues) spans 234–246; it reads EEPKTKKARKDTE. Ser-253 is modified (phosphoserine). Over residues 262–271 the composition is skewed to basic residues; that stretch reads EKHKYPHKVK. Phosphoserine is present on residues Ser-281 and Ser-283. The segment covering 288 to 308 has biased composition (basic and acidic residues); it reads SKYESSKESQQHSKSSADKIG. A Phosphoserine modification is found at Ser-312. 2 stretches are compositionally biased toward basic and acidic residues: residues 323–353 and 362–376; these read KRKEESSYKEIEPVASKRKENAIKLKGETKT and AKKESVSPEDSEKKR. Phosphoserine is present on Ser-368. Positions 402-492 constitute a BRCT domain; that stretch reads GAENCLEGLI…PGKKSKYEIA (91 aa). 2 stretches are compositionally biased toward basic and acidic residues: residues 496–507 and 520–538; these read EMKKESKLERTP and SKKESESKKSRPTSKRDSL. Residues 496–538 form a disordered region; sequence EMKKESKLERTPQKNVQGKRKISPSKKESESKKSRPTSKRDSL. The residue at position 537 (Ser-537) is a Phosphoserine. 650 to 657 is an ATP binding site; the sequence is SGPPGVGK. The interval 1081-1148 is disordered; it reads KASRHSTSPS…RKGKGKSSKK (68 aa). Residues 1094–1105 show a composition bias toward acidic residues; it reads EYNEELNEDDSQ. Ser-1104 and Ser-1106 each carry phosphoserine. A Nuclear localization signal motif is present at residues 1120-1124; it reads IKKKT. A compositionally biased stretch (basic and acidic residues) spans 1130–1140; sequence SKPEKDKEPRK.

It belongs to the activator 1 large subunit family. Large subunit of the RFC complex, an heteropentameric complex consisting of RFC1 and four small subunits RFC2, RFC3, RFC4 and RFC5; the RFC complex interacts with PCNA and the interaction involves RFC1. In terms of tissue distribution, wide tissue distribution. Undetectable in placental tissue.

The protein localises to the nucleus. Its function is as follows. Subunit of the replication factor C (RFC) complex which acts during elongation of primed DNA templates by DNA polymerases delta and epsilon, and is necessary for ATP-dependent loading of proliferating cell nuclear antigen (PCNA) onto primed DNA. This subunit binds to the primer-template junction. Binds the PO-B transcription element as well as other GA rich DNA sequences. Can bind single- or double-stranded DNA. The chain is Replication factor C subunit 1 (RFC1) from Homo sapiens (Human).